The primary structure comprises 315 residues: Long form salivary protein D7L2 (315 aa).

Positions Met-1 to Ala-18 are cleaved as a signal peptide. Intrachain disulfides connect Cys-37–Cys-73, Cys-69–Cys-128, Cys-178–Cys-211, and Cys-252–Cys-263.

Belongs to the PBP/GOBP family. As to quaternary structure, interacts with host coagulation factor XII/F12 (inactive and activated). Interacts with host coagulation factor XI/F11 (inactive).

Its subcellular location is the secreted. Modulates blood feeding of female mosquitoes on vertebrate species by binding and sequestering different mediators involved in the host response. Binds leukotriene B4 and leukotriene D4. Exhibits anticoagulant activity targeting the intrinsic coagulation pathway; binds coagulation factors XII and XI, preventing generation of activated FXIIa and FXIa. The chain is Long form salivary protein D7L2 from Anopheles gambiae (African malaria mosquito).